A 177-amino-acid chain; its full sequence is Large ribosomal subunit protein uL6 (177 aa).

The protein belongs to the universal ribosomal protein uL6 family. In terms of assembly, part of the 50S ribosomal subunit.

Its function is as follows. This protein binds to the 23S rRNA, and is important in its secondary structure. It is located near the subunit interface in the base of the L7/L12 stalk, and near the tRNA binding site of the peptidyltransferase center. This chain is Large ribosomal subunit protein uL6, found in Sinorhizobium medicae (strain WSM419) (Ensifer medicae).